The following is a 40-amino-acid chain: Large ribosomal subunit protein bL36 (40 aa).

The protein belongs to the bacterial ribosomal protein bL36 family.

This Corynebacterium aurimucosum (strain ATCC 700975 / DSM 44827 / CIP 107346 / CN-1) (Corynebacterium nigricans) protein is Large ribosomal subunit protein bL36.